The sequence spans 252 residues: MQIKRWFLNNSLRNYQYLLYDKSHAIVIDPLKSDIFAEFIAKNKLQLEAILITHKHGDHIAGVKKLLAIYPNAKVYAYTENDLFKPDIYVKDGSFINLGFTSFRVMYTPGHIDDHVCFLFEQERALFCGDTLFNAGVGGVQAESADINQLYDSLVKITKLDGDIKPYPAHDYWLGNLDFALSILADDSYFNYYRNQVAELAAEDKPIVNLAEEAKLNIFIRAMSDKALLKALPDYSLGREMFVKLRQLKNNF.

H54, H56, D58, H59, H111, D130, and H170 together coordinate Zn(2+).

The protein belongs to the metallo-beta-lactamase superfamily. Glyoxalase II family. In terms of assembly, monomer. Zn(2+) is required as a cofactor.

The enzyme catalyses an S-(2-hydroxyacyl)glutathione + H2O = a 2-hydroxy carboxylate + glutathione + H(+). It participates in secondary metabolite metabolism; methylglyoxal degradation; (R)-lactate from methylglyoxal: step 2/2. Thiolesterase that catalyzes the hydrolysis of S-D-lactoyl-glutathione to form glutathione and D-lactic acid. This chain is Hydroxyacylglutathione hydrolase, found in Francisella tularensis subsp. novicida (strain U112).